The chain runs to 364 residues: tRNA 2-selenouridine synthase (364 aa).

Positions 14-137 (LLADTPLIDV…LRQTAIQATW (124 aa)) constitute a Rhodanese domain. The active-site S-selanylcysteine intermediate is the C97.

It belongs to the SelU family. As to quaternary structure, monomer.

It carries out the reaction 5-methylaminomethyl-2-thiouridine(34) in tRNA + selenophosphate + (2E)-geranyl diphosphate + H2O + H(+) = 5-methylaminomethyl-2-selenouridine(34) in tRNA + (2E)-thiogeraniol + phosphate + diphosphate. It catalyses the reaction 5-methylaminomethyl-2-thiouridine(34) in tRNA + (2E)-geranyl diphosphate = 5-methylaminomethyl-S-(2E)-geranyl-thiouridine(34) in tRNA + diphosphate. The enzyme catalyses 5-methylaminomethyl-S-(2E)-geranyl-thiouridine(34) in tRNA + selenophosphate + H(+) = 5-methylaminomethyl-2-(Se-phospho)selenouridine(34) in tRNA + (2E)-thiogeraniol. The catalysed reaction is 5-methylaminomethyl-2-(Se-phospho)selenouridine(34) in tRNA + H2O = 5-methylaminomethyl-2-selenouridine(34) in tRNA + phosphate. In terms of biological role, involved in the post-transcriptional modification of the uridine at the wobble position (U34) of tRNA(Lys), tRNA(Glu) and tRNA(Gln). Catalyzes the conversion of 2-thiouridine (S2U-RNA) to 2-selenouridine (Se2U-RNA). Acts in a two-step process involving geranylation of 2-thiouridine (S2U) to S-geranyl-2-thiouridine (geS2U) and subsequent selenation of the latter derivative to 2-selenouridine (Se2U) in the tRNA chain. The chain is tRNA 2-selenouridine synthase from Salmonella choleraesuis (strain SC-B67).